We begin with the raw amino-acid sequence, 379 residues long: tRNA(Met) cytidine acetate ligase (379 aa).

Residues 7-20 (ITEYNPFHNGHQYH), G100, N153, and R178 each bind ATP.

It belongs to the TmcAL family.

Its subcellular location is the cytoplasm. It catalyses the reaction cytidine(34) in elongator tRNA(Met) + acetate + ATP = N(4)-acetylcytidine(34) in elongator tRNA(Met) + AMP + diphosphate. Functionally, catalyzes the formation of N(4)-acetylcytidine (ac(4)C) at the wobble position of elongator tRNA(Met), using acetate and ATP as substrates. First activates an acetate ion to form acetyladenylate (Ac-AMP) and then transfers the acetyl group to tRNA to form ac(4)C34. The protein is tRNA(Met) cytidine acetate ligase of Staphylococcus aureus (strain Mu3 / ATCC 700698).